A 206-amino-acid chain; its full sequence is Small ribosomal subunit protein uS4 (206 aa).

The S4 RNA-binding domain maps to 96–161 (RRLDNVVYRM…QGRIQAALAL (66 aa)).

This sequence belongs to the universal ribosomal protein uS4 family. In terms of assembly, part of the 30S ribosomal subunit. Contacts protein S5. The interaction surface between S4 and S5 is involved in control of translational fidelity.

Functionally, one of the primary rRNA binding proteins, it binds directly to 16S rRNA where it nucleates assembly of the body of the 30S subunit. Its function is as follows. With S5 and S12 plays an important role in translational accuracy. This is Small ribosomal subunit protein uS4 from Legionella pneumophila (strain Corby).